The primary structure comprises 380 residues: Outer mitochondrial transmembrane helix translocase (380 aa).

Residues 1 to 18 (MLSDIPRDALLRPLTRNE) lie on the Mitochondrial intermembrane side of the membrane. A helical membrane pass occupies residues 19–37 (VVGMLVRLTVFGAATYYSI). Residues 38-380 (KWVVDALDPT…PANLREVPLD (343 aa)) lie on the Cytoplasmic side of the membrane. 136–143 (GPPGCGKT) contacts ATP.

This sequence belongs to the AAA ATPase family. MSP1 subfamily.

It localises to the mitochondrion outer membrane. The protein localises to the peroxisome membrane. The protein resides in the postsynaptic cell membrane. It carries out the reaction [protein]-with a C-terminal TM segment(out) + ATP + H2O = [protein]-with a C-terminal TM segment(in) + ADP + phosphate + H(+). Functionally, outer mitochondrial translocase required to remove mislocalized tail-anchored transmembrane proteins on mitochondria. Specifically recognizes and binds tail-anchored transmembrane proteins: acts as a dislocase that mediates the ATP-dependent extraction of mistargeted tail-anchored transmembrane proteins from the mitochondrion outer membrane. Also plays a critical role in regulating the surface expression of AMPA receptors (AMPAR), thereby regulating synaptic plasticity and learning and memory. The protein is Outer mitochondrial transmembrane helix translocase of Danio rerio (Zebrafish).